A 308-amino-acid polypeptide reads, in one-letter code: Pantoate--beta-alanine ligase (308 aa).

A2 is a propeptide (removed; partial).

The protein belongs to the pantothenate synthetase family. As to quaternary structure, homodimer. Expressed at low levels in leaf and root.

The protein localises to the cytoplasm. The enzyme catalyses (R)-pantoate + beta-alanine + ATP = (R)-pantothenate + AMP + diphosphate + H(+). It functions in the pathway cofactor biosynthesis; (R)-pantothenate biosynthesis; (R)-pantothenate from (R)-pantoate and beta-alanine: step 1/1. The sequence is that of Pantoate--beta-alanine ligase (PANC) from Lotus japonicus (Lotus corniculatus var. japonicus).